The primary structure comprises 391 residues: NAD(P)H-quinone oxidoreductase subunit H, chloroplastic (391 aa).

The protein belongs to the complex I 49 kDa subunit family. NDH is composed of at least 16 different subunits, 5 of which are encoded in the nucleus.

The protein localises to the plastid. It localises to the chloroplast thylakoid membrane. It carries out the reaction a plastoquinone + NADH + (n+1) H(+)(in) = a plastoquinol + NAD(+) + n H(+)(out). The enzyme catalyses a plastoquinone + NADPH + (n+1) H(+)(in) = a plastoquinol + NADP(+) + n H(+)(out). NDH shuttles electrons from NAD(P)H:plastoquinone, via FMN and iron-sulfur (Fe-S) centers, to quinones in the photosynthetic chain and possibly in a chloroplast respiratory chain. The immediate electron acceptor for the enzyme in this species is believed to be plastoquinone. Couples the redox reaction to proton translocation, and thus conserves the redox energy in a proton gradient. The polypeptide is NAD(P)H-quinone oxidoreductase subunit H, chloroplastic (Nephroselmis olivacea (Green alga)).